The chain runs to 336 residues: P2Y purinoceptor 13 (336 aa).

Over 1–32 (MLGTVNTTGMQGFNKSERCPRDTRMTQLLFPV) the chain is Extracellular. N-linked (GlcNAc...) asparagine glycans are attached at residues Asn6 and Asn14. A helical transmembrane segment spans residues 33–53 (LYTVVFFTGVLLNTLALWVFI). At 54–60 (HIPSNST) the chain is on the cytoplasmic side. Residues 61–81 (FIIYLKNTLVADLIMTLMLPF) traverse the membrane as a helical segment. The Extracellular segment spans residues 82–100 (KILSDSRLAPWQLRGFVCT). A disulfide bridge connects residues Cys99 and Cys176. The chain crosses the membrane as a helical span at residues 101–121 (FSSVVFYETMYVGIMMLGLIA). At 122–144 (FDRFLKIVVPFRKTFVKKTAFAK) the chain is on the cytoplasmic side. A helical membrane pass occupies residues 145 to 165 (IVSISIWLLMFLISLPNMILN). Over 166-193 (KEATASTVKKCASLKSPLGLLWHQVVSH) the chain is Extracellular. Residues 194-214 (TCQFIFWTVFILMLLFYTVIA) form a helical membrane-spanning segment. The Cytoplasmic portion of the chain corresponds to 215–237 (KKVYDSYRKFKSRDSKHKRLEAK). A helical membrane pass occupies residues 238–258 (VFIVMAVFFVCFAPFHFVRVP). The Extracellular portion of the chain corresponds to 259 to 281 (YTHSQTTNKTDCRLENQLFLAKE). Asn266 carries an N-linked (GlcNAc...) asparagine glycan. Residues 282–302 (STLFLATTNICMDPLIYIILC) traverse the membrane as a helical segment. Over 303 to 336 (KKFTRKVPCMRWRTKTAASSDEHHSSQTDNITLS) the chain is Cytoplasmic.

The protein belongs to the G-protein coupled receptor 1 family. Highest levels in spleen, liver brain and kidney. Lower but significant level are also detected in intestine, stomach, skeletal muscle, testis, heart and lung.

The protein localises to the cell membrane. Its function is as follows. Receptor for ADP. Coupled to G(i)-proteins. May play a role in hematopoiesis and the immune system. The chain is P2Y purinoceptor 13 (P2ry13) from Rattus norvegicus (Rat).